The chain runs to 66 residues: Large ribosomal subunit protein bL35 (66 aa).

Positions 1–42 (MPKQKTHRASAKRFKRTANGGLKRHHAYTGHRFHGKTKKQRR) are disordered.

The protein belongs to the bacterial ribosomal protein bL35 family.

This is Large ribosomal subunit protein bL35 from Lactobacillus gasseri (strain ATCC 33323 / DSM 20243 / BCRC 14619 / CIP 102991 / JCM 1131 / KCTC 3163 / NCIMB 11718 / NCTC 13722 / AM63).